A 398-amino-acid chain; its full sequence is MIVKAKFVKGFIRDVHPYGCRREVLNQIDYCKKAIGFRGPKKVLIVGASSGFGLATRISVAFGGPEAHTIGVSYETGATDRRIGTAGWYNNIFFKEFAKKKGLVAKNFIEDAFSNETKDKVIKYIKDEFGKIDLFVYSLAAPRRKDYKTGNVYTSRIKTILGDFEGPTIDVERDEITLKKVSSASIEEIEETRKVMGGEDWQEWCEELLYEDCFSDKATTIAYSYIGSPRTYKIYREGTIGIAKKDLEDKAKLINEKLNRVIGGRAFVSVNKALVTKASAYIPTFPLYAAILYKVMKEKNIHENCIMQIERMFSEKIYSNEKIQFDDKGRLRMDDLELRKDVQDEVDRIWSNITPENFKELSDYKGYKKEFMNLNGFDLDGVDYSKDLDIELLRKLEP.

NAD(+) contacts are provided by residues G47–F52, Y74–E75, D111–A112, and L139–A140. Y225 provides a ligand contact to substrate. Y235 serves as the catalytic Proton donor. NAD(+) contacts are provided by residues K244 and L274 to T276.

The protein belongs to the TER reductase family. Monomer.

The catalysed reaction is a 2,3-saturated acyl-CoA + NAD(+) = a (2E)-enoyl-CoA + NADH + H(+). Its pathway is lipid metabolism; fatty acid biosynthesis. Its function is as follows. Involved in the fatty acid synthesis (FAS II). Catalyzes the reduction of the carbon-carbon double bond of crotonyl-CoA to yield butyryl-CoA. The protein is Trans-2-enoyl-CoA reductase [NADH] of Clostridium acetobutylicum (strain ATCC 824 / DSM 792 / JCM 1419 / IAM 19013 / LMG 5710 / NBRC 13948 / NRRL B-527 / VKM B-1787 / 2291 / W).